The chain runs to 199 residues: MQTIVLEAERRMPGKKSDLKQLRANGNVPATLYHKGEPSISLSVKEQSLRKVIYTTESHIINLRFTDGTEKPSVMKDYQFNPLTDSITHADFQLLKSDEYVEVEVPILFTGNPVGVVKGGMVQATLHKLEIRCLPSDMPEHITVDISSMDMGESLHVGELSSKIQEKIEFTVLTDSHAPVISVLAPRVVADAAPVAPEA.

It belongs to the bacterial ribosomal protein bL25 family. CTC subfamily. Part of the 50S ribosomal subunit; part of the 5S rRNA/L5/L18/L25 subcomplex. Contacts the 5S rRNA. Binds to the 5S rRNA independently of L5 and L18.

Functionally, this is one of the proteins that binds to the 5S RNA in the ribosome where it forms part of the central protuberance. The polypeptide is Large ribosomal subunit protein bL25 (Chloroherpeton thalassium (strain ATCC 35110 / GB-78)).